Here is a 147-residue protein sequence, read N- to C-terminus: Nucleoside diphosphate kinase (147 aa).

Residues K9, F57, R85, T91, R102, and N112 each contribute to the ATP site. The active-site Pros-phosphohistidine intermediate is the H115.

This sequence belongs to the NDK family. Mg(2+) is required as a cofactor.

It localises to the cytoplasm. The catalysed reaction is a 2'-deoxyribonucleoside 5'-diphosphate + ATP = a 2'-deoxyribonucleoside 5'-triphosphate + ADP. The enzyme catalyses a ribonucleoside 5'-diphosphate + ATP = a ribonucleoside 5'-triphosphate + ADP. Functionally, major role in the synthesis of nucleoside triphosphates other than ATP. The ATP gamma phosphate is transferred to the NDP beta phosphate via a ping-pong mechanism, using a phosphorylated active-site intermediate. In Thermoplasma volcanium (strain ATCC 51530 / DSM 4299 / JCM 9571 / NBRC 15438 / GSS1), this protein is Nucleoside diphosphate kinase.